We begin with the raw amino-acid sequence, 335 residues long: MEQKQSKSVAIWLFLCSIMIVLMVGIGGFTRLSKAGLSITEWNPITGAFPPLNERDWLQEKSKYETTPEYKTFNYGMSMEEFRTLYLIEYVHRLFARLTGLIFILPFIYFTLKKRISKKVVIRLSIALSFGVLQAFTGWYMVKSGLVAKPHVSHYMLTLHLLLALVIFALLSYQFFNYQVRQKQTKLKISGSTVHYVGIILILIVVQIIFGAFVAGLNAGLIYNTFPLMGGHIIPKDLFFLQPTWLNIFENRATVQFIHRTLALLILVLTTVLTIKNASVKSVYVMLLSVIIQIILGVVTLLLHIPITIAISHQMFSFILFGSGLCFLCYLRKQN.

Helical transmembrane passes span 9-29 (VAIW…IGGF), 90-110 (YVHR…FIYF), 120-140 (VVIR…TGWY), 156-176 (MLTL…YQFF), 197-217 (VGII…VAGL), 255-275 (VQFI…VLTI), 283-303 (VYVM…TLLL), and 309-329 (IAIS…CFLC). Residue histidine 259 participates in heme binding. Histidine 313 provides a ligand contact to heme.

Belongs to the COX15/CtaA family. Type 2 subfamily. As to quaternary structure, interacts with CtaB. It depends on heme b as a cofactor.

It localises to the cell membrane. The enzyme catalyses Fe(II)-heme o + 2 A + H2O = Fe(II)-heme a + 2 AH2. It functions in the pathway porphyrin-containing compound metabolism; heme A biosynthesis; heme A from heme O: step 1/1. In terms of biological role, catalyzes the conversion of heme O to heme A by two successive hydroxylations of the methyl group at C8. The first hydroxylation forms heme I, the second hydroxylation results in an unstable dihydroxymethyl group, which spontaneously dehydrates, resulting in the formyl group of heme A. This is Heme A synthase from Wolbachia sp. subsp. Brugia malayi (strain TRS).